Here is a 753-residue protein sequence, read N- to C-terminus: 5-methyltetrahydropteroyltriglutamate--homocysteine methyltransferase (753 aa).

Residues 17–20 and K117 contribute to the 5-methyltetrahydropteroyltri-L-glutamate site; that span reads RELK. Residues 431–433 and E484 contribute to the L-homocysteine site; that span reads IGS. L-methionine contacts are provided by residues 431–433 and E484; that span reads IGS. 5-methyltetrahydropteroyltri-L-glutamate is bound by residues 515–516 and W561; that span reads RC. D599 contacts L-homocysteine. D599 lines the L-methionine pocket. Residue E605 participates in 5-methyltetrahydropteroyltri-L-glutamate binding. 3 residues coordinate Zn(2+): H641, C643, and E665. H694 acts as the Proton donor in catalysis. C726 contacts Zn(2+).

This sequence belongs to the vitamin-B12 independent methionine synthase family. It depends on Zn(2+) as a cofactor.

It catalyses the reaction 5-methyltetrahydropteroyltri-L-glutamate + L-homocysteine = tetrahydropteroyltri-L-glutamate + L-methionine. It functions in the pathway amino-acid biosynthesis; L-methionine biosynthesis via de novo pathway; L-methionine from L-homocysteine (MetE route): step 1/1. Its function is as follows. Catalyzes the transfer of a methyl group from 5-methyltetrahydrofolate to homocysteine resulting in methionine formation. In Enterobacter sp. (strain 638), this protein is 5-methyltetrahydropteroyltriglutamate--homocysteine methyltransferase.